Consider the following 337-residue polypeptide: Ketol-acid reductoisomerase (NADP(+)) (337 aa).

Residues 3 to 183 form the KARI N-terminal Rossmann domain; sequence VEMFYDDDAD…GGARAGVIKT (181 aa). Residues 26–29, K49, S52, S54, and 84–87 each bind NADP(+); these read YGSQ and DTAQ. H109 is an active-site residue. G135 is an NADP(+) binding site. Residues 184 to 329 enclose the KARI C-terminal knotted domain; sequence TFKEETETDL…KKLRDLMSWV (146 aa). Mg(2+)-binding residues include D192, E196, E228, and E232. Substrate is bound at residue S253.

It belongs to the ketol-acid reductoisomerase family. Mg(2+) serves as cofactor.

It catalyses the reaction (2R)-2,3-dihydroxy-3-methylbutanoate + NADP(+) = (2S)-2-acetolactate + NADPH + H(+). It carries out the reaction (2R,3R)-2,3-dihydroxy-3-methylpentanoate + NADP(+) = (S)-2-ethyl-2-hydroxy-3-oxobutanoate + NADPH + H(+). The protein operates within amino-acid biosynthesis; L-isoleucine biosynthesis; L-isoleucine from 2-oxobutanoate: step 2/4. It participates in amino-acid biosynthesis; L-valine biosynthesis; L-valine from pyruvate: step 2/4. Involved in the biosynthesis of branched-chain amino acids (BCAA). Catalyzes an alkyl-migration followed by a ketol-acid reduction of (S)-2-acetolactate (S2AL) to yield (R)-2,3-dihydroxy-isovalerate. In the isomerase reaction, S2AL is rearranged via a Mg-dependent methyl migration to produce 3-hydroxy-3-methyl-2-ketobutyrate (HMKB). In the reductase reaction, this 2-ketoacid undergoes a metal-dependent reduction by NADPH to yield (R)-2,3-dihydroxy-isovalerate. The polypeptide is Ketol-acid reductoisomerase (NADP(+)) (Mycolicibacterium smegmatis (strain ATCC 700084 / mc(2)155) (Mycobacterium smegmatis)).